The chain runs to 413 residues: Peptidase T (413 aa).

Histidine 81 contributes to the Zn(2+) binding site. Residue aspartate 83 is part of the active site. Aspartate 143 is a binding site for Zn(2+). The active-site Proton acceptor is the glutamate 178. 3 residues coordinate Zn(2+): glutamate 179, aspartate 201, and histidine 383.

The protein belongs to the peptidase M20B family. Zn(2+) is required as a cofactor.

It is found in the cytoplasm. It catalyses the reaction Release of the N-terminal residue from a tripeptide.. Its function is as follows. Cleaves the N-terminal amino acid of tripeptides. This is Peptidase T from Lactococcus lactis subsp. cremoris (Streptococcus cremoris).